Consider the following 528-residue polypeptide: PC4 and SFRS1-interacting protein (528 aa).

One can recognise a PWWP domain in the interval 7 to 64 (PGDLIFAKMKGYPHWPARVDEVPDGAVKPPTNKLPIFFFGTHETAFLGPKDIFPYSEN). The tract at residues 61–348 (YSENKEKYGK…EKKRETSMDS (288 aa)) is disordered. Lys75 participates in a covalent cross-link: Glycyl lysine isopeptide (Lys-Gly) (interchain with G-Cter in SUMO2). Residues 92-106 (FSSQQASTKQSNASS) are compositionally biased toward polar residues. Phosphoserine is present on residues Ser102, Ser105, and Ser106. A compositionally biased stretch (basic and acidic residues) spans 113–135 (KETNVSKEDTDQEEKASNEDVTK). 2 positions are modified to phosphothreonine: Thr115 and Thr122. Ser129 is modified (phosphoserine). Position 141 is a phosphothreonine (Thr141). Basic residues predominate over residues 144-153 (AARRGRKRKA). A Nuclear localization signal motif is present at residues 146 to 156 (RRGRKRKAEKQ). 2 positions are modified to phosphoserine: Ser176 and Ser205. The segment covering 212 to 260 (DEDKSKKKGPEEKQPKKQLKKEEEGQKEEEKPRKEPDKKEGKKEVESKR) has biased composition (basic and acidic residues). Ser270 is modified (phosphoserine). Thr271 carries the phosphothreonine modification. Phosphoserine occurs at positions 272 and 274. A compositionally biased stretch (basic residues) spans 285 to 300 (KRKGGRNFQAAHRRNM). Over residues 303–348 (GQHEKEAGDRKRKQEEQMETEQQNKDEGKKPEVKKVEKKRETSMDS) the composition is skewed to basic and acidic residues. Coiled-coil stretches lie at residues 306-332 (EKEA…EGKK) and 369-393 (NRCI…KHTE). The interval 338 to 415 (VEKKRETSMD…VSQVIMEKST (78 aa)) is integrase-binding domain (IBD). Ser432 carries the post-translational modification Phosphoserine. Residue Thr435 is modified to Phosphothreonine. Residue Ser441 is modified to Phosphoserine. Over residues 444–471 (EQRQHEEANKTKDQGKKGPNKKLEKEPT) the composition is skewed to basic and acidic residues. Positions 444-528 (EQRQHEEANK…ISLKESTLDN (85 aa)) are disordered. A compositionally biased stretch (polar residues) spans 472-492 (GTKSLNGGSDAQESNHPQHNG). Residues 496–528 (EDGKDSREASSKTKPPGEEREAEISLKESTLDN) show a composition bias toward basic and acidic residues. Arg515 carries the citrulline modification. Ser520 carries the post-translational modification Phosphoserine. Thr525 is modified (phosphothreonine).

It belongs to the HDGF family. As to quaternary structure, monomer. Interacts with IFRD1/PC4. Interacts (via IBD domain) with POGZ (via IBM motif) and CDCA7L (via IBM motifs). Interacts (via IBD domain) with KMT2A (via IBM motifs) with a moderate affinity whereas interacts with the KMT2A-MEN1 complex with a greater affinity; MEN1 enhances interaction of KMT2A with PSIP1. Interacts (via IBD domain) with IWS1 (via IBM motif), MED1 (via IBM motif) and DBF4 (via IBM motifs). Citrullinated by PADI4.

The protein localises to the nucleus. Its function is as follows. Transcriptional coactivator involved in neuroepithelial stem cell differentiation and neurogenesis. Involved in particular in lens epithelial cell gene regulation and stress responses. May play an important role in lens epithelial to fiber cell terminal differentiation. May play a protective role during stress-induced apoptosis. The sequence is that of PC4 and SFRS1-interacting protein (Psip1) from Mus musculus (Mouse).